A 162-amino-acid chain; its full sequence is Putative ripening-related protein 7 (162 aa).

An N-terminal signal peptide occupies residues 1 to 30 (MAAAAASTKIVAVVVAVLLAILEMPSCAVA).

This sequence belongs to the kiwellin family.

The protein resides in the secreted. The protein is Putative ripening-related protein 7 of Oryza sativa subsp. japonica (Rice).